The following is a 462-amino-acid chain: Solute carrier family 41 member 3 (462 aa).

9 consecutive transmembrane segments (helical) span residues 41 to 61 (CQVAIPILLSGLGMMTAGLVM), 121 to 141 (LAVVQVQATVVGLLAAVASLM), 163 to 183 (VITAFLAALALGILMICIVIG), 194 to 214 (IATPIAASLGDLITLSILALM), 225 to 245 (WYLTPLVCIGFLALTPLWIFI), 258 to 278 (YGWFPIILAMIISSFGGLILS), 351 to 371 (VLLFLVVPGHLIFFYLICLVE), 380 to 400 (IFVLLYLMAGMMQVVILLYLA), and 424 to 444 (GLGDLLGTSLLALCFLLDWLL).

It belongs to the SLC41A transporter family.

Its subcellular location is the mitochondrion inner membrane. It catalyses the reaction Mg(2+)(in) + 2 Na(+)(out) = Mg(2+)(out) + 2 Na(+)(in). Na(+)/Mg(2+) ion exchanger that acts as a predominant Mg(2+) efflux system at the mitochondrial inner membrane. This chain is Solute carrier family 41 member 3 (Slc41a3), found in Rattus norvegicus (Rat).